The chain runs to 784 residues: Cell wall protein Lmo0130 (784 aa).

Positions 1–34 (MKVNKFFKKTTHVLLVAGLTIGLTAPFTGTTAQA) are cleaved as a signal peptide. The tract at residues 690 to 761 (ATTPPDNGNG…NTSLPTTGDT (72 aa)) is disordered. Residues 697–729 (GNGGTDNGNGNGNNGGTDGNGGTNNGNGSGTNG) are compositionally biased toward gly residues. Low complexity predominate over residues 730-759 (GTTTTEDPTTTTSNTSTTGTSSNTSLPTTG). An LPXTG sorting signal motif is present at residues 755–759 (LPTTG). T758 is subject to Pentaglycyl murein peptidoglycan amidated threonine. A propeptide spans 759–784 (GDTAGLATVFGVILTTTALYVLRKRS) (removed by sortase A).

The protein resides in the secreted. The protein localises to the cell wall. The protein is Cell wall protein Lmo0130 of Listeria monocytogenes serovar 1/2a (strain ATCC BAA-679 / EGD-e).